Here is a 384-residue protein sequence, read N- to C-terminus: Histidinol-phosphate aminotransferase (384 aa).

Lys223 is modified (N6-(pyridoxal phosphate)lysine).

It belongs to the class-II pyridoxal-phosphate-dependent aminotransferase family. Pyridoxal 5'-phosphate is required as a cofactor.

The enzyme catalyses L-histidinol phosphate + 2-oxoglutarate = 3-(imidazol-4-yl)-2-oxopropyl phosphate + L-glutamate. The protein operates within amino-acid biosynthesis; L-histidine biosynthesis; L-histidine from 5-phospho-alpha-D-ribose 1-diphosphate: step 7/9. In Schizosaccharomyces pombe (strain 972 / ATCC 24843) (Fission yeast), this protein is Histidinol-phosphate aminotransferase (his3).